We begin with the raw amino-acid sequence, 278 residues long: Tryptophan synthase alpha chain (278 aa).

Catalysis depends on proton acceptor residues E50 and D61.

It belongs to the TrpA family. Tetramer of two alpha and two beta chains.

It carries out the reaction (1S,2R)-1-C-(indol-3-yl)glycerol 3-phosphate + L-serine = D-glyceraldehyde 3-phosphate + L-tryptophan + H2O. It participates in amino-acid biosynthesis; L-tryptophan biosynthesis; L-tryptophan from chorismate: step 5/5. Functionally, the alpha subunit is responsible for the aldol cleavage of indoleglycerol phosphate to indole and glyceraldehyde 3-phosphate. The protein is Tryptophan synthase alpha chain of Methylobacterium nodulans (strain LMG 21967 / CNCM I-2342 / ORS 2060).